A 348-amino-acid polypeptide reads, in one-letter code: Fructose-1,6-bisphosphatase class 1 (348 aa).

Positions 107, 129, 131, and 132 each coordinate Mg(2+). Substrate contacts are provided by residues 132 to 135 (DGSS), N224, Y252, and K282. Residue E288 participates in Mg(2+) binding.

This sequence belongs to the FBPase class 1 family. Homotetramer. It depends on Mg(2+) as a cofactor.

It localises to the cytoplasm. The enzyme catalyses beta-D-fructose 1,6-bisphosphate + H2O = beta-D-fructose 6-phosphate + phosphate. It functions in the pathway carbohydrate biosynthesis; Calvin cycle. In Microcystis aeruginosa (strain NIES-843 / IAM M-2473), this protein is Fructose-1,6-bisphosphatase class 1.